The chain runs to 123 residues: Immunoglobulin lambda variable 5-37 (123 aa).

An N-terminal signal peptide occupies residues 1 to 19; that stretch reads MAWTPLLLLLLSHCTGSLS. The segment at 20–44 is framework-1; that stretch reads QPVLTQPPSSSASPGESARLTCTLP. An Ig-like domain is found at 21-123; the sequence is PVLTQPPSSS…YCMIWPSNAS (103 aa). Cysteines 41 and 115 form a disulfide. The interval 45–53 is complementarity-determining-1; that stretch reads SDINVGSYN. The framework-2 stretch occupies residues 54 to 70; that stretch reads IYWYQQKPGSPPRYLLY. The interval 71–77 is complementarity-determining-2; that stretch reads YYSDSDK. Positions 78 to 115 are framework-3; the sequence is GQGSGVPSRFSGSKDASANTGILLISGLQSEDEADYYC. The tract at residues 116–123 is complementarity-determining-3; it reads MIWPSNAS.

In terms of assembly, immunoglobulins are composed of two identical heavy chains and two identical light chains; disulfide-linked.

The protein resides in the secreted. It is found in the cell membrane. Functionally, v region of the variable domain of immunoglobulin light chains that participates in the antigen recognition. Immunoglobulins, also known as antibodies, are membrane-bound or secreted glycoproteins produced by B lymphocytes. In the recognition phase of humoral immunity, the membrane-bound immunoglobulins serve as receptors which, upon binding of a specific antigen, trigger the clonal expansion and differentiation of B lymphocytes into immunoglobulins-secreting plasma cells. Secreted immunoglobulins mediate the effector phase of humoral immunity, which results in the elimination of bound antigens. The antigen binding site is formed by the variable domain of one heavy chain, together with that of its associated light chain. Thus, each immunoglobulin has two antigen binding sites with remarkable affinity for a particular antigen. The variable domains are assembled by a process called V-(D)-J rearrangement and can then be subjected to somatic hypermutations which, after exposure to antigen and selection, allow affinity maturation for a particular antigen. In Homo sapiens (Human), this protein is Immunoglobulin lambda variable 5-37.